Consider the following 336-residue polypeptide: Methionyl-tRNA formyltransferase (336 aa).

A (6S)-5,6,7,8-tetrahydrofolate-binding site is contributed by 112–115 (SILP).

It belongs to the Fmt family.

The enzyme catalyses L-methionyl-tRNA(fMet) + (6R)-10-formyltetrahydrofolate = N-formyl-L-methionyl-tRNA(fMet) + (6S)-5,6,7,8-tetrahydrofolate + H(+). Attaches a formyl group to the free amino group of methionyl-tRNA(fMet). The formyl group appears to play a dual role in the initiator identity of N-formylmethionyl-tRNA by promoting its recognition by IF2 and preventing the misappropriation of this tRNA by the elongation apparatus. In Trichodesmium erythraeum (strain IMS101), this protein is Methionyl-tRNA formyltransferase.